The primary structure comprises 396 residues: ATP-dependent RNA helicase eIF4A (396 aa).

The short motif at 22 to 50 (HKFDELKLKEVLLRGIYGYGFVDPSAIQQ) is the Q motif element. Positions 53–223 (ILPIIEGHDV…DKFMNKPVRI (171 aa)) constitute a Helicase ATP-binding domain. 66-73 (AQSGTGKT) is an ATP binding site. A DEAD box motif is present at residues 171 to 174 (DEAD). Residues 234–395 (GIQQYYINVE…ELPANIADLF (162 aa)) enclose the Helicase C-terminal domain.

The protein belongs to the DEAD box helicase family. eIF4A subfamily. In terms of assembly, component of the eIF4F complex, which composition varies with external and internal environmental conditions. It is composed of at least eIF4A, eIF4E and eIF4G.

Its subcellular location is the cytoplasm. The catalysed reaction is ATP + H2O = ADP + phosphate + H(+). Its function is as follows. ATP-dependent RNA helicase which is a subunit of the eIF4F complex involved in cap recognition and is required for mRNA binding to ribosome. In the current model of translation initiation, eIF4A unwinds RNA secondary structures in the 5'-UTR of mRNAs which is necessary to allow efficient binding of the small ribosomal subunit, and subsequent scanning for the initiator codon. The protein is ATP-dependent RNA helicase eIF4A (TIF1) of Eremothecium gossypii (strain ATCC 10895 / CBS 109.51 / FGSC 9923 / NRRL Y-1056) (Yeast).